A 469-amino-acid polypeptide reads, in one-letter code: MVISESMDILFRIRGGLDLAFQLATPNEIFLKKALKHVLSDLSTKLSSNALVFRICHSSVYIWPSSDINTIPGELTDASACKNILRFIQFEPEEDIKRKFMRKKDKKLSDMHQIVNIDLMLEMSTSLAAVTPIVERESGGHHYVNMTLPVDAVISVAPEETWGKVRKLLVDAIHNQLTDMEKCILKYMKGTSIVVPEPLHFLLPGKKNLVTISYPSGIPDGQLQAYREELHDLFNLPHDRPYFKRSNAYHFPDEPYKDGYIRNPHTYLNPPNMETGMIYVVQGIYGYHHYMQDRIDDNGWGCAYRSLQTICSWFKHQGYTERSIPTHREIQQALVDAGDKPATFVGSRQWIGSIEVQLVLNQLIGITSKILFVSQGSEIASQGRELANHFQSEGTPVMIGGGVLAHTILGVAWNEITGQIKFLILDPHYTGAEDLQVILEKGWCGWKGPDFWNKDAYYNLCLPQRPNMI.

Met-1 bears the N-acetylmethionine mark. Active-site residues include Cys-302, Asp-426, and His-428.

Belongs to the peptidase C78 family.

It is found in the endoplasmic reticulum. Its subcellular location is the cytoplasm. It localises to the nucleus. Its function is as follows. Thiol-dependent isopeptidase that specifically cleaves UFM1, a ubiquitin-like modifier protein, from conjugated proteins, such as CD274/PD-L1, CYB5R3, DDRGK1, MRE11, RPL26/uL24, TRIP4 and RPL26/uL24. While it is also able to mediate the processing of UFM1 precursors, a prerequisite for conjugation reactions, UFSP2 mainly acts as a protein deUFMylase that mediates deconjugation of UFM1 from target proteins. Mediates deUFMylation of RPL26/uL24, a critical step to release the UFM1 ribosome E3 ligase (UREL) complex during the recycling of 60S ribosome subunits from the endoplasmic reticulum. Catalyzes deUFMylation of TRIP4, regulating intracellular nuclear receptors transactivation and thereby regulate cell proliferation and differentiation. This Pongo abelii (Sumatran orangutan) protein is Ufm1-specific protease 2.